The following is a 239-amino-acid chain: Putative antitoxin VapB45 (239 aa).

Its function is as follows. Possibly the antitoxin component of a type II toxin-antitoxin (TA) system. Its cognate toxin is VapC45. This chain is Putative antitoxin VapB45, found in Mycobacterium tuberculosis (strain ATCC 25618 / H37Rv).